Consider the following 275-residue polypeptide: Light-independent protochlorophyllide reductase iron-sulfur ATP-binding protein (275 aa).

ATP contacts are provided by residues 10–15 (GIGKST) and Lys-39. Residue Ser-14 coordinates Mg(2+). 2 residues coordinate [4Fe-4S] cluster: Cys-95 and Cys-129. 180-181 (NR) lines the ATP pocket.

It belongs to the NifH/BchL/ChlL family. As to quaternary structure, homodimer. Protochlorophyllide reductase is composed of three subunits; ChlL, ChlN and ChlB. It depends on [4Fe-4S] cluster as a cofactor.

It carries out the reaction chlorophyllide a + oxidized 2[4Fe-4S]-[ferredoxin] + 2 ADP + 2 phosphate = protochlorophyllide a + reduced 2[4Fe-4S]-[ferredoxin] + 2 ATP + 2 H2O. Its pathway is porphyrin-containing compound metabolism; chlorophyll biosynthesis (light-independent). Functionally, component of the dark-operative protochlorophyllide reductase (DPOR) that uses Mg-ATP and reduced ferredoxin to reduce ring D of protochlorophyllide (Pchlide) to form chlorophyllide a (Chlide). This reaction is light-independent. The L component serves as a unique electron donor to the NB-component of the complex, and binds Mg-ATP. The polypeptide is Light-independent protochlorophyllide reductase iron-sulfur ATP-binding protein (Gloeobacter violaceus (strain ATCC 29082 / PCC 7421)).